The chain runs to 160 residues: E3 ubiquitin ligase complex SCF subunit sconC (160 aa).

The tract at residues 101 to 160 is interaction with the F-box domain of F-box proteins; it reads ILAANYLDIKALLDVGCKTVANMIKGKSPEEIRKTFNIQNDFTPEEEDQIRRENEWAEDR.

This sequence belongs to the SKP1 family. In terms of assembly, component of the SCF (SKP1-CUL1-F-box protein) E3 ubiquitin ligase complexes.

Its pathway is protein modification; protein ubiquitination. Its function is as follows. Essential component of the SCF (SKP1-CUL1-F-box protein) E3 ubiquitin ligase complexes, which mediate the ubiquitination and subsequent proteasomal degradation of target proteins. Controls sulfur metabolite repression, probably by mediating the inactivation or degradation of the metR transcription factor. This is E3 ubiquitin ligase complex SCF subunit sconC (sconC) from Talaromyces stipitatus (strain ATCC 10500 / CBS 375.48 / QM 6759 / NRRL 1006) (Penicillium stipitatum).